Here is an 873-residue protein sequence, read N- to C-terminus: Protein SEY1 (873 aa).

Residues 1–20 (MVANGHFAGSADGQHSSSYE) are disordered. Residues 1 to 749 (MVANGHFAGS…KRSAIGGITQ (749 aa)) lie on the Cytoplasmic side of the membrane. The GB1/RHD3-type G domain occupies 49 to 307 (GFNYHLISVF…IPADGFAVYA (259 aa)). 59–66 (GSQSTGKS) provides a ligand contact to GTP. A coiled-coil region spans residues 482 to 506 (SNYQQELSLYQKDLERTSGQLRRDE). The tract at residues 677–703 (DKWIGHTPSSATPADEEDLTPIGGVDD) is disordered. The segment covering 690-703 (ADEEDLTPIGGVDD) has biased composition (acidic residues). A helical membrane pass occupies residues 750–770 (VPLYFYGLLFALGWNEILAVL). Residues 771 to 773 (RNP) are Lumenal-facing. Residues 774 to 794 (VYFLLLFVCAIGAYITYQLNL) traverse the membrane as a helical segment. The Cytoplasmic portion of the chain corresponds to 795–873 (WGPIIKMTEA…EDVDDDDDDF (79 aa)). The disordered stretch occupies residues 828-873 (RQAMAMSGARNATEEHEMSRLSRKPAERGGRKNRADEDVDDDDDDF). Over residues 839–863 (ATEEHEMSRLSRKPAERGGRKNRAD) the composition is skewed to basic and acidic residues. Acidic residues predominate over residues 864 to 873 (EDVDDDDDDF).

The protein belongs to the TRAFAC class dynamin-like GTPase superfamily. GB1/RHD3 GTPase family. RHD3 subfamily.

The protein resides in the endoplasmic reticulum membrane. In terms of biological role, cooperates with the reticulon proteins and tubule-shaping DP1 family proteins to generate and maintain the structure of the tubular endoplasmic reticulum network. Has GTPase activity, which is required for its function in ER organization. This Ajellomyces capsulatus (strain NAm1 / WU24) (Darling's disease fungus) protein is Protein SEY1.